The chain runs to 855 residues: Beta-mannosidase B (855 aa).

N98 carries an N-linked (GlcNAc...) asparagine glycan. E430 acts as the Proton donor in catalysis. N-linked (GlcNAc...) asparagine glycans are attached at residues N693 and N730.

It belongs to the glycosyl hydrolase 2 family. Beta-mannosidase B subfamily. Homodimer.

It localises to the secreted. The catalysed reaction is Hydrolysis of terminal, non-reducing beta-D-mannose residues in beta-D-mannosides.. It functions in the pathway glycan metabolism; N-glycan degradation. Functionally, exoglycosidase that cleaves the single beta-linked mannose residue from the non-reducing end of beta-mannosidic oligosaccharides of various complexity and length. Prefers mannobiose over mannotriose. Is also severely restricted by galactosyl substitutions at the +1 subsite. Has no activity against polymeric mannan. This is Beta-mannosidase B (man9) from Thermothelomyces thermophilus (Myceliophthora thermophila).